A 584-amino-acid polypeptide reads, in one-letter code: DNA mismatch repair protein MutL (584 aa).

It belongs to the DNA mismatch repair MutL/HexB family.

This protein is involved in the repair of mismatches in DNA. It is required for dam-dependent methyl-directed DNA mismatch repair. May act as a 'molecular matchmaker', a protein that promotes the formation of a stable complex between two or more DNA-binding proteins in an ATP-dependent manner without itself being part of a final effector complex. This is DNA mismatch repair protein MutL from Buchnera aphidicola subsp. Acyrthosiphon pisum (strain Tuc7).